The following is a 179-amino-acid chain: Ribosomal-protein-serine acetyltransferase (179 aa).

An N-acetyltransferase domain is found at 11 to 172; the sequence is LELHAVAENH…NDAYDDVNLY (162 aa).

Belongs to the acetyltransferase family. RimL subfamily.

The protein localises to the cytoplasm. The catalysed reaction is N-terminal L-seryl-[ribosomal protein bL12] + acetyl-CoA = N-terminal N(alpha)-acetyl-L-seryl-[ribosomal protein bL12] + CoA + H(+). Its function is as follows. This enzyme acetylates the N-terminal serine of ribosomal protein bL12, converting it into the acetylated form of bL12 known as bL7. This is Ribosomal-protein-serine acetyltransferase from Escherichia coli (strain K12).